Here is a 191-residue protein sequence, read N- to C-terminus: CASP-like protein 4C2 (191 aa).

Residues 1 to 29 (MEAADSATNNSKDTHFYGKSRAENRRRSD) are Cytoplasmic-facing. The helical transmembrane segment at 30–50 (AMLLLFRALTFSFSLAAVVVM) threads the bilayer. At 51 to 72 (GTNRYRINPQLKVSWYDFEPYR) the chain is on the extracellular side. Residues 73–93 (YVLAVNAIICIYSFVETWLAV) traverse the membrane as a helical segment. The Cytoplasmic portion of the chain corresponds to 94-116 (YTYLQGSYLLPEIFQVWFDYGHD). A helical transmembrane segment spans residues 117-137 (QGFAYLLFSANSAGVAMAQLL). At 138 to 161 (QSGNTLIHGAYHCTEAGGYCTQAR) the chain is on the extracellular side. The helical transmembrane segment at 162-182 (VSIALGFVAFLFLALSSLLTG) threads the bilayer. The Cytoplasmic portion of the chain corresponds to 183–191 (LRVARWYLR).

The protein belongs to the Casparian strip membrane proteins (CASP) family. As to quaternary structure, homodimer and heterodimers.

The protein resides in the cell membrane. This is CASP-like protein 4C2 from Physcomitrium patens (Spreading-leaved earth moss).